The sequence spans 321 residues: D-alanine--D-alanine ligase (321 aa).

In terms of domain architecture, ATP-grasp spans 121 to 315 (RSWFLTNNIN…FVNLIEEILK (195 aa)). An ATP-binding site is contributed by 148 to 199 (IKRPYVIKPFTQGSSIGVEVIFEEDDFNFANYDFPYGDEVIIEKYIKGRELQ). Mg(2+) is bound by residues Glu268, Glu282, and Asn284.

It belongs to the D-alanine--D-alanine ligase family. The cofactor is Mg(2+). Mn(2+) is required as a cofactor.

It localises to the cytoplasm. The catalysed reaction is 2 D-alanine + ATP = D-alanyl-D-alanine + ADP + phosphate + H(+). The protein operates within cell wall biogenesis; peptidoglycan biosynthesis. In terms of biological role, cell wall formation. The polypeptide is D-alanine--D-alanine ligase (Rickettsia bellii (strain OSU 85-389)).